We begin with the raw amino-acid sequence, 239 residues long: Pyridoxine 5'-phosphate synthase (239 aa).

N7 lines the 3-amino-2-oxopropyl phosphate pocket. Residue 9 to 10 coordinates 1-deoxy-D-xylulose 5-phosphate; sequence DH. R18 lines the 3-amino-2-oxopropyl phosphate pocket. H43 functions as the Proton acceptor in the catalytic mechanism. The 1-deoxy-D-xylulose 5-phosphate site is built by R45 and H50. E70 acts as the Proton acceptor in catalysis. A 1-deoxy-D-xylulose 5-phosphate-binding site is contributed by T100. Residue H191 is the Proton donor of the active site. 3-amino-2-oxopropyl phosphate is bound by residues G192 and 213-214; that span reads GH.

Belongs to the PNP synthase family. In terms of assembly, homooctamer; tetramer of dimers.

It localises to the cytoplasm. It catalyses the reaction 3-amino-2-oxopropyl phosphate + 1-deoxy-D-xylulose 5-phosphate = pyridoxine 5'-phosphate + phosphate + 2 H2O + H(+). The protein operates within cofactor biosynthesis; pyridoxine 5'-phosphate biosynthesis; pyridoxine 5'-phosphate from D-erythrose 4-phosphate: step 5/5. Catalyzes the complicated ring closure reaction between the two acyclic compounds 1-deoxy-D-xylulose-5-phosphate (DXP) and 3-amino-2-oxopropyl phosphate (1-amino-acetone-3-phosphate or AAP) to form pyridoxine 5'-phosphate (PNP) and inorganic phosphate. The protein is Pyridoxine 5'-phosphate synthase of Trichormus variabilis (strain ATCC 29413 / PCC 7937) (Anabaena variabilis).